The chain runs to 592 residues: Malic enzyme, hydrogenosomal (592 aa).

Residues 1 to 27 constitute a hydrogenosome transit peptide; the sequence is MLAPIQTIARPVSSILPATGALAAKRT. Tyr-134 acts as the Proton donor in catalysis. 182-205 provides a ligand contact to NADP(+); that stretch reads VTDGSRILGLGDLGAGGMQIPIGK. Residue Arg-187 participates in NAD(+) binding. The active-site Proton acceptor is Lys-205. Residues Glu-276, Asp-277, and Asp-300 each coordinate a divalent metal cation. Asp-300 lines the NAD(+) pocket. 335–352 provides a ligand contact to NADP(+); the sequence is GAGSSGVGVCETIVDCIV. Asn-443 lines the NAD(+) pocket.

Belongs to the malic enzymes family. The cofactor is Mg(2+). Requires Mn(2+) as cofactor.

Its subcellular location is the hydrogenosome. The enzyme catalyses (S)-malate + NADP(+) = pyruvate + CO2 + NADPH. It carries out the reaction oxaloacetate + H(+) = pyruvate + CO2. This chain is Malic enzyme, hydrogenosomal, found in Neocallimastix frontalis (Rumen fungus).